Here is a 196-residue protein sequence, read N- to C-terminus: Cyclin-dependent kinase inhibitor 6 (196 aa).

2 disordered regions span residues 1-36 (MSER…PDSH) and 55-151 (ASDE…RKTP). A compositionally biased stretch (low complexity) spans 124-139 (SEGLGETTTEMESSSA). Thr-152 is subject to Phosphothreonine; by KIN10.

The protein belongs to the CDI family. ICK/KRP subfamily. In terms of assembly, specifically interacts with CDKA-1, but not with CDKB1-1. Interacts with CYCD1-1, CYCD4-1 and RHF1A. Binds to FBL17. Interacts with KIN10. Interacts with CYCD3-1. In terms of processing, ubiquitinated by RHF1A and SCF(FBL17). Ubiquitination leads to its subsequent degradation, thus controlling cell cycle progression. The phosphorylation at Thr-152 by KIN10 represses its activity. In terms of tissue distribution, expressed in newly formed organs such as the shoot apex. Expressed in cotyledon, primary root and marginal region of the leaves as well as in developing pollen.

The protein resides in the nucleus. It is found in the nucleoplasm. With respect to regulation, down-regulated by KIN10 under a phosphorylation-dependent manner. Functionally, binds and inhibits CYCD2-1/CDKA-1 complex kinase activity. Regulates cell division which is crucial for plant growth, development and morphogenesis. May inhibit CDK kinases specifically involved in the G1/S phase transition. This chain is Cyclin-dependent kinase inhibitor 6 (KRP6), found in Arabidopsis thaliana (Mouse-ear cress).